A 476-amino-acid polypeptide reads, in one-letter code: Aspartyl/glutamyl-tRNA(Asn/Gln) amidotransferase subunit B (476 aa).

Belongs to the GatB/GatE family. GatB subfamily. In terms of assembly, heterotrimer of A, B and C subunits.

It carries out the reaction L-glutamyl-tRNA(Gln) + L-glutamine + ATP + H2O = L-glutaminyl-tRNA(Gln) + L-glutamate + ADP + phosphate + H(+). The catalysed reaction is L-aspartyl-tRNA(Asn) + L-glutamine + ATP + H2O = L-asparaginyl-tRNA(Asn) + L-glutamate + ADP + phosphate + 2 H(+). Functionally, allows the formation of correctly charged Asn-tRNA(Asn) or Gln-tRNA(Gln) through the transamidation of misacylated Asp-tRNA(Asn) or Glu-tRNA(Gln) in organisms which lack either or both of asparaginyl-tRNA or glutaminyl-tRNA synthetases. The reaction takes place in the presence of glutamine and ATP through an activated phospho-Asp-tRNA(Asn) or phospho-Glu-tRNA(Gln). The sequence is that of Aspartyl/glutamyl-tRNA(Asn/Gln) amidotransferase subunit B from Listeria monocytogenes serotype 4b (strain CLIP80459).